A 344-amino-acid polypeptide reads, in one-letter code: MSNAITMGIFWHLIGAASAACFYAPFKQVKQWSWETMWSVGGIVSWLILPWTISALLLPDFWAYYGQFNLSTLLPVFLFGAMWGIGNINYGLTMRYLGMSMGIGIAIGITLIVGTLMTPIINGNFDVLIHTEGGRMTLLGVFVALIGVGIVTRAGQLKERKMGIKAEEFNLKKGLLLAVMCGIFSAGMSFAMNAAKPMHEAAAALGVDPLYVALPSYVVIMGGGALVNLGFCFIRLAKVQNLSIKADFSLARPLIISNILLSALGGLMWYLQFFFYAWGHARIPAQYDYMSWMLHMSFYVLCGGLVGLVLKEWKNAGRRPVAVLSLGCVVIIIAANIVGLGMAS.

Transmembrane regions (helical) follow at residues 4 to 24 (AITM…CFYA), 38 to 58 (WSVG…ALLL), 68 to 88 (FNLS…IGNI), 101 to 121 (MGIG…TPII), 137 to 157 (TLLG…AGQL), 175 to 195 (LLLA…MNAA), 214 to 234 (LPSY…FCFI), 259 to 279 (ILLS…YAWG), 290 to 310 (MSWM…GLVL), and 321 to 341 (VAVL…VGLG).

This sequence belongs to the L-rhamnose transporter (TC 2.A.7.6) family.

The protein resides in the cell inner membrane. The catalysed reaction is L-rhamnopyranose(in) + H(+)(in) = L-rhamnopyranose(out) + H(+)(out). In terms of biological role, uptake of L-rhamnose across the cytoplasmic membrane with the concomitant transport of protons into the cell (symport system). The chain is L-rhamnose-proton symporter from Salmonella agona (strain SL483).